Consider the following 364-residue polypeptide: MRLMVSGGGTGGHIYPALALIKALKKREPNSAVMYVGSERGLESTIVPAKGIPFQATRIQGFKRSLSLENFKTVYLFLKSVHEAKKMIRQFKPDVVVGTGGYVSGAVVYAAARLHVPTLIHEQNSVVGITNRFLSRYVDRIAYVFDAALDQLPVNKMVKTGNPRAQEAAEVVSHFSWTEYGLQDDVPTLLIFGGSQGALKINAATVAAIPEFNHREYQVVFVTGQKRYDGVMAQLKGTTVADNVVIKPYIGNMPEVLPRVAAIVGRAGATSLAEITADGIPSILIPSPYVTADHQTKNANSLATVGAAEIIKEADLTGETLIAKADQLMTNDALRQDMATASKQLGVPDAADRVLDVVEALKRD.

UDP-N-acetyl-alpha-D-glucosamine-binding positions include 10 to 12 (TGG), N124, S195, I250, and Q295.

This sequence belongs to the glycosyltransferase 28 family. MurG subfamily.

It is found in the cell membrane. The enzyme catalyses Mur2Ac(oyl-L-Ala-gamma-D-Glu-L-Lys-D-Ala-D-Ala)-di-trans,octa-cis-undecaprenyl diphosphate + UDP-N-acetyl-alpha-D-glucosamine = beta-D-GlcNAc-(1-&gt;4)-Mur2Ac(oyl-L-Ala-gamma-D-Glu-L-Lys-D-Ala-D-Ala)-di-trans,octa-cis-undecaprenyl diphosphate + UDP + H(+). Its pathway is cell wall biogenesis; peptidoglycan biosynthesis. In terms of biological role, cell wall formation. Catalyzes the transfer of a GlcNAc subunit on undecaprenyl-pyrophosphoryl-MurNAc-pentapeptide (lipid intermediate I) to form undecaprenyl-pyrophosphoryl-MurNAc-(pentapeptide)GlcNAc (lipid intermediate II). The chain is UDP-N-acetylglucosamine--N-acetylmuramyl-(pentapeptide) pyrophosphoryl-undecaprenol N-acetylglucosamine transferase from Levilactobacillus brevis (strain ATCC 367 / BCRC 12310 / CIP 105137 / JCM 1170 / LMG 11437 / NCIMB 947 / NCTC 947) (Lactobacillus brevis).